We begin with the raw amino-acid sequence, 91 residues long: Small ribosomal subunit protein uS19 (91 aa).

It belongs to the universal ribosomal protein uS19 family.

Functionally, protein S19 forms a complex with S13 that binds strongly to the 16S ribosomal RNA. This chain is Small ribosomal subunit protein uS19, found in Synechococcus sp. (strain CC9902).